We begin with the raw amino-acid sequence, 434 residues long: MEHLTLGPLTRANGTVRLPGSKSISNRVLLLAALATGETRVRDLLDSDDTRVMLQALRTLGVAWRQEGDDYIVTGAGGNFPNKSAELFMGNAGTAIRPLTAALALQGGNYKLSGVPRMHERPIGDLVDGLRQVGAVIDYLGNEGFPPLHIQPAGIRIDAPIRVRGDVSSQFLTALLMSLPMAQSDSGRIEIEVVGELISKPYIEITLNLLARFGIEIERQGWERFVLPAGAAYRSPGEIFVEGDASSASYFLAAGAIGGGPVRVEGVGMASIQGDVRFAEALNRMGANVMAGDNWIEVRGTERDDGRLHGIELDCNHIPDAAMTLAVAALFAEGTTTLTNIASWRVKETDRIAAMATELRKLGAVVEEGADYLRVTPPQPWQTPADGIGTYDDHRMAMCFSLAAFGPLPVRINDPGCVAKTFPDYFSVFAGVTG.

3 residues coordinate 3-phosphoshikimate: Lys22, Ser23, and Arg27. A phosphoenolpyruvate-binding site is contributed by Lys22. Residues Gly93 and Arg121 each coordinate phosphoenolpyruvate. 3-phosphoshikimate contacts are provided by Ser168, Ser169, Gln170, Ser199, Asp320, and Lys347. Gln170 provides a ligand contact to phosphoenolpyruvate. Catalysis depends on Asp320, which acts as the Proton acceptor. Phosphoenolpyruvate is bound by residues Arg351, Arg395, and Lys420.

The protein belongs to the EPSP synthase family. Monomer.

Its subcellular location is the cytoplasm. It carries out the reaction 3-phosphoshikimate + phosphoenolpyruvate = 5-O-(1-carboxyvinyl)-3-phosphoshikimate + phosphate. Its pathway is metabolic intermediate biosynthesis; chorismate biosynthesis; chorismate from D-erythrose 4-phosphate and phosphoenolpyruvate: step 6/7. Functionally, catalyzes the transfer of the enolpyruvyl moiety of phosphoenolpyruvate (PEP) to the 5-hydroxyl of shikimate-3-phosphate (S3P) to produce enolpyruvyl shikimate-3-phosphate and inorganic phosphate. This chain is 3-phosphoshikimate 1-carboxyvinyltransferase, found in Cupriavidus necator (strain ATCC 17699 / DSM 428 / KCTC 22496 / NCIMB 10442 / H16 / Stanier 337) (Ralstonia eutropha).